Reading from the N-terminus, the 309-residue chain is Ribosomal RNA small subunit methyltransferase H (309 aa).

Residues 34 to 36 (GGH), Asp-54, Phe-80, Asp-102, and Gln-109 each bind S-adenosyl-L-methionine.

It belongs to the methyltransferase superfamily. RsmH family.

It is found in the cytoplasm. The enzyme catalyses cytidine(1402) in 16S rRNA + S-adenosyl-L-methionine = N(4)-methylcytidine(1402) in 16S rRNA + S-adenosyl-L-homocysteine + H(+). Specifically methylates the N4 position of cytidine in position 1402 (C1402) of 16S rRNA. The sequence is that of Ribosomal RNA small subunit methyltransferase H from Cellvibrio japonicus (strain Ueda107) (Pseudomonas fluorescens subsp. cellulosa).